The following is a 302-amino-acid chain: Pathogenicity locus probable regulatory protein HrpS (302 aa).

A Sigma-54 factor interaction domain is found at Asp-9–Leu-237. ATP contacts are provided by residues Gly-37 to Asp-44 and Ala-99 to Glu-108. Residues Ile-279–Lys-298 constitute a DNA-binding region (H-T-H motif).

In terms of biological role, member of the two-component regulatory system HrpR/HrpS that regulates the activation of the sigma factor hrpL which itself induces the expression of hprD as well as other hrp loci which are involved in plant pathogenicity, hrmA and avr genes. Probably interacts with sigma-54. In Pseudomonas savastanoi pv. phaseolicola (Pseudomonas syringae pv. phaseolicola), this protein is Pathogenicity locus probable regulatory protein HrpS (hrpS).